Here is a 431-residue protein sequence, read N- to C-terminus: Methionine aminopeptidase 2-2 (431 aa).

Residues methionine 1 to phenylalanine 76 are disordered. Residues glutamate 35–aspartate 47 show a composition bias toward acidic residues. Histidine 184 provides a ligand contact to substrate. Positions 204, 215, and 284 each coordinate a divalent metal cation. Histidine 292 contacts substrate. A divalent metal cation contacts are provided by glutamate 317 and glutamate 412.

This sequence belongs to the peptidase M24A family. Methionine aminopeptidase eukaryotic type 2 subfamily. Co(2+) serves as cofactor. It depends on Zn(2+) as a cofactor. Requires Mn(2+) as cofactor. The cofactor is Fe(2+).

Its subcellular location is the cytoplasm. The enzyme catalyses Release of N-terminal amino acids, preferentially methionine, from peptides and arylamides.. Cotranslationally removes the N-terminal methionine from nascent proteins. The N-terminal methionine is often cleaved when the second residue in the primary sequence is small and uncharged (Met-Ala-, Cys, Gly, Pro, Ser, Thr, or Val). The chain is Methionine aminopeptidase 2-2 from Aspergillus niger (strain ATCC MYA-4892 / CBS 513.88 / FGSC A1513).